Consider the following 237-residue polypeptide: Endonuclease V (237 aa).

Mg(2+) contacts are provided by Asp-46 and Asp-114.

This sequence belongs to the endonuclease V family. The cofactor is Mg(2+).

The protein localises to the cytoplasm. It catalyses the reaction Endonucleolytic cleavage at apurinic or apyrimidinic sites to products with a 5'-phosphate.. Its function is as follows. DNA repair enzyme involved in the repair of deaminated bases. Selectively cleaves double-stranded DNA at the second phosphodiester bond 3' to a deoxyinosine leaving behind the intact lesion on the nicked DNA. The chain is Endonuclease V from Xanthomonas oryzae pv. oryzae (strain PXO99A).